Reading from the N-terminus, the 152-residue chain is Transcription elongation factor Spt5 (152 aa).

A KOW domain is found at 94–124; that stretch reads PGDLVEVIAGPFKGQKAKVVKIDESKDEVVV.

Belongs to the archaeal Spt5 family. Heterodimer composed of Spt4 and Spt5. Interacts with RNA polymerase (RNAP) independently of nucleic acids. Forms a homodimer in solution.

Stimulates transcription elongation. This chain is Transcription elongation factor Spt5, found in Pyrococcus furiosus (strain ATCC 43587 / DSM 3638 / JCM 8422 / Vc1).